The primary structure comprises 193 residues: Imidazoleglycerol-phosphate dehydratase (193 aa).

Belongs to the imidazoleglycerol-phosphate dehydratase family.

The protein localises to the cytoplasm. It catalyses the reaction D-erythro-1-(imidazol-4-yl)glycerol 3-phosphate = 3-(imidazol-4-yl)-2-oxopropyl phosphate + H2O. It functions in the pathway amino-acid biosynthesis; L-histidine biosynthesis; L-histidine from 5-phospho-alpha-D-ribose 1-diphosphate: step 6/9. In Metallosphaera sedula (strain ATCC 51363 / DSM 5348 / JCM 9185 / NBRC 15509 / TH2), this protein is Imidazoleglycerol-phosphate dehydratase.